The chain runs to 98 residues: NADH-ubiquinone oxidoreductase chain 4L (98 aa).

3 helical membrane passes run 1–21 (MTMVYANIFLAFITSLMGLLM), 29–49 (SLLCLEGMMLSLFVMMTVTIL), and 61–81 (IVLLVFAACEAALGLSLLVMV).

It belongs to the complex I subunit 4L family. Core subunit of respiratory chain NADH dehydrogenase (Complex I) which is composed of 45 different subunits.

Its subcellular location is the mitochondrion inner membrane. It carries out the reaction a ubiquinone + NADH + 5 H(+)(in) = a ubiquinol + NAD(+) + 4 H(+)(out). Functionally, core subunit of the mitochondrial membrane respiratory chain NADH dehydrogenase (Complex I) which catalyzes electron transfer from NADH through the respiratory chain, using ubiquinone as an electron acceptor. Part of the enzyme membrane arm which is embedded in the lipid bilayer and involved in proton translocation. This is NADH-ubiquinone oxidoreductase chain 4L (MT-ND4L) from Monachus monachus (Mediterranean monk seal).